We begin with the raw amino-acid sequence, 81 residues long: Cytochrome b559 subunit alpha (81 aa).

The chain crosses the membrane as a helical span at residues 21-35; the sequence is VIHSITIPMLFIAGW. Histidine 23 contributes to the heme binding site.

The protein belongs to the PsbE/PsbF family. In terms of assembly, heterodimer of an alpha subunit and a beta subunit. PSII is composed of 1 copy each of membrane proteins PsbA, PsbB, PsbC, PsbD, PsbE, PsbF, PsbH, PsbI, PsbJ, PsbK, PsbL, PsbM, PsbT, PsbX, PsbY, PsbZ, Psb30/Ycf12, peripheral proteins PsbO, CyanoQ (PsbQ), PsbU, PsbV and a large number of cofactors. It forms dimeric complexes. The cofactor is heme b.

The protein resides in the cellular thylakoid membrane. This b-type cytochrome is tightly associated with the reaction center of photosystem II (PSII). PSII is a light-driven water:plastoquinone oxidoreductase that uses light energy to abstract electrons from H(2)O, generating O(2) and a proton gradient subsequently used for ATP formation. It consists of a core antenna complex that captures photons, and an electron transfer chain that converts photonic excitation into a charge separation. This is Cytochrome b559 subunit alpha from Picosynechococcus sp. (strain ATCC 27264 / PCC 7002 / PR-6) (Agmenellum quadruplicatum).